We begin with the raw amino-acid sequence, 275 residues long: NH(3)-dependent NAD(+) synthetase (275 aa).

Residue Gly-46 to Ser-53 participates in ATP binding. Position 52 (Asp-52) interacts with Mg(2+). Arg-140 is a binding site for deamido-NAD(+). Thr-160 is an ATP binding site. Glu-165 is a binding site for Mg(2+). The deamido-NAD(+) site is built by Lys-173 and Asp-180. The ATP site is built by Lys-189 and Thr-211. His-260 to Lys-261 serves as a coordination point for deamido-NAD(+).

It belongs to the NAD synthetase family. Homodimer.

It catalyses the reaction deamido-NAD(+) + NH4(+) + ATP = AMP + diphosphate + NAD(+) + H(+). Its pathway is cofactor biosynthesis; NAD(+) biosynthesis; NAD(+) from deamido-NAD(+) (ammonia route): step 1/1. Its function is as follows. Catalyzes the ATP-dependent amidation of deamido-NAD to form NAD. Uses ammonia as a nitrogen source. This chain is NH(3)-dependent NAD(+) synthetase, found in Escherichia coli O45:K1 (strain S88 / ExPEC).